Here is a 443-residue protein sequence, read N- to C-terminus: D(2) dopamine receptor (443 aa).

Residues 1-37 (MDPLNLSWYDDDLESQNWSRPFNGSEGKPGKPHYNYY) are Extracellular-facing. N-linked (GlcNAc...) asparagine glycans are attached at residues N5, N17, and N23. A helical membrane pass occupies residues 38-60 (AMLLTLLIFIIVFGNVLVCMAVS). The Cytoplasmic portion of the chain corresponds to 61–70 (REKALQTTTN). A helical transmembrane segment spans residues 71 to 93 (YLIVSLAVADLLVATLVMPWVVY). The Extracellular segment spans residues 94 to 108 (LEVVGEWKFSRIHCD). Cysteines 107 and 182 form a disulfide. Residues 109–130 (IFVTLDVMMCTASILNLCAISI) traverse the membrane as a helical segment. Residues 131–151 (DRYTAVAMPMLYNTRYSSKRR) lie on the Cytoplasmic side of the membrane. A helical membrane pass occupies residues 152 to 172 (VTVMIAIVWVLSFTISCPLLF). Over 173-188 (GLNNTDQNECIIANPA) the chain is Extracellular. The chain crosses the membrane as a helical span at residues 189-213 (FVVYSSIVSFYVPFIVTLLVYIKIY). The segment at 211–373 (KIYIVLRRRR…SQQKEKKATQ (163 aa)) is interaction with PPP1R9B. Residues 214-373 (IVLRRRRKRV…SQQKEKKATQ (160 aa)) lie on the Cytoplasmic side of the membrane. The disordered stretch occupies residues 282-332 (EMLSSTSPPERTRYSPIPPSHHQLTLPDPSHHGLHSTADSPAKPEKNGHAK). Residues 323–332 (AKPEKNGHAK) show a composition bias toward basic and acidic residues. Residues 374-395 (MLAIVLGVFIICWLPFFITHIL) form a helical membrane-spanning segment. Residues 396–409 (NIHCECNIPPVLYS) lie on the Extracellular side of the membrane. C399 and C401 are joined by a disulfide. Residues 410-431 (AFTWLGYVNSAVNPIIYTTFNI) traverse the membrane as a helical segment. Topologically, residues 432–443 (EFRKAFLKILHC) are cytoplasmic. C443 is lipidated: S-palmitoyl cysteine.

It belongs to the G-protein coupled receptor 1 family. As to quaternary structure, forms homo- and heterooligomers with DRD4. The interaction with DRD4 may modulate agonist-induced downstream signaling. Interacts with CADPS and CADPS2. Interacts with GPRASP1, PPP1R9B and CLIC6. Interacts with ARRB2. Interacts with HTR2A. Interacts with DRD1. Interacts with KCNA2. Post-translationally, palmitoylated. Palmitoylation which is required for proper localization to the plasma membrane and stability of the receptor could be carried on by ZDHHC4, ZDHHC3 and ZDHHC8.

It localises to the cell membrane. It is found in the golgi apparatus membrane. Dopamine receptor whose activity is mediated by G proteins which inhibit adenylyl cyclase. Positively regulates postnatal regression of retinal hyaloid vessels via suppression of VEGFR2/KDR activity, downstream of OPN5. In Canis lupus familiaris (Dog), this protein is D(2) dopamine receptor (DRD2).